The chain runs to 495 residues: Germacrene A acid 8-beta-hydroxylase (495 aa).

Residues 3-23 (PFTTFSLVASSLILLICWALV) form a helical; Signal-anchor for type II membrane protein membrane-spanning segment. Asparagine 103 carries N-linked (GlcNAc...) asparagine glycosylation. Cysteine 433 contacts heme.

It belongs to the cytochrome P450 family. It depends on heme as a cofactor. In terms of tissue distribution, mostly expressed in leaves and flowers, and, to a lower extent, in roots and stems.

It is found in the membrane. It carries out the reaction germacra-1(10),4,11(13)-trien-12-oate + reduced [NADPH--hemoprotein reductase] + O2 = 8beta-hydroxygermacra-1(10),4,11(13)-trien-12-oate + oxidized [NADPH--hemoprotein reductase] + H2O + H(+). The enzyme catalyses germacra-1(10),4,11(13)-trien-12-oate + reduced [NADPH--hemoprotein reductase] + O2 = 8-epi-inunolide + oxidized [NADPH--hemoprotein reductase] + 2 H2O. The catalysed reaction is germacra-1(10),4,11(13)-trien-12-oate + reduced [NADPH--hemoprotein reductase] + O2 = 8alpha-hydroxygermacra-1(10),4,11(13)-trien-12-oate + oxidized [NADPH--hemoprotein reductase] + H2O + H(+). It participates in secondary metabolite biosynthesis; terpenoid biosynthesis. Functionally, involved in the biosynthesis of germacrene-derived sesquiterpene lactones. Hydroxylates germacrene A acid to 8-beta-hydroxy-germacrene A and 8-alpha-hydroxy-germacrene A acids. Unlike 8-alpha-hydroxy-germacrene A acid with is spontaneously converted into inunolide (12, 8-alpha), 8-beta-hydroxy-germacrene A cannot undergo spontaneous lactonization. In Inula hupehensis (Inula helianthus-aquatilis subsp. hupehensis), this protein is Germacrene A acid 8-beta-hydroxylase.